The primary structure comprises 132 residues: Acyl-CoA thioester hydrolase YciA (132 aa).

The HotDog ACOT-type domain maps to 8–123 (PQGDLVLRTL…LFKYVAVDPE (116 aa)).

The protein belongs to the acyl coenzyme A hydrolase family.

Its function is as follows. Catalyzes the hydrolysis of the thioester bond in palmitoyl-CoA and malonyl-CoA. This is Acyl-CoA thioester hydrolase YciA (yciA) from Escherichia coli O6:H1 (strain CFT073 / ATCC 700928 / UPEC).